The primary structure comprises 210 residues: Cytidylate kinase (210 aa).

9–17 (GPAAAGKGT) is a binding site for ATP.

Belongs to the cytidylate kinase family. Type 1 subfamily.

Its subcellular location is the cytoplasm. It carries out the reaction CMP + ATP = CDP + ADP. It catalyses the reaction dCMP + ATP = dCDP + ADP. In Agrobacterium fabrum (strain C58 / ATCC 33970) (Agrobacterium tumefaciens (strain C58)), this protein is Cytidylate kinase.